The sequence spans 468 residues: Nuclear pore complex protein Nup50 (468 aa).

Positions 1–16 are enriched in basic and acidic residues; it reads MAKRNAEKELTDRNWD. The interval 1–26 is disordered; the sequence is MAKRNAEKELTDRNWDQEDEAEEVGT. At A2 the chain carries N-acetylalanine. An N6-acetyllysine modification is found at K8. Position 52 is a phosphoserine (S52). Repeat unit 1 spans residues 76-77; it reads FG. The segment at 76–304 is 5 X 2 AA repeats of F-G; sequence FGSGAGGKPL…FSPGNSSLFG (229 aa). N6-acetyllysine is present on K83. The stretch at 113–114 is repeat 2; the sequence is FG. Disordered regions lie at residues 122 to 148 and 201 to 224; these read TTLV…LASS and HGNS…SPSL. K127 carries the N6-acetyllysine modification. A compositionally biased stretch (low complexity) spans 137–148; the sequence is SQQPSSSGLASS. The interval 144–206 is binding to CDKN1B; the sequence is GLASSKACVG…IEQQHGNSGR (63 aa). Residues S208 and S221 each carry the phosphoserine modification. Residues 225–226 form repeat 3; the sequence is FG. Residue S234 is modified to Phosphoserine. Residues 238–269 are disordered; the sequence is FHGNKTEDTPDKKMEVASEKKTDPSSLGATSA. Residues 241 to 260 are compositionally biased toward basic and acidic residues; that stretch reads NKTEDTPDKKMEVASEKKTD. Phosphothreonine occurs at positions 246 and 259. S270 carries the post-translational modification Phosphoserine. Repeat unit 4 spans residues 273–274; that stretch reads FG. S296 bears the Phosphoserine mark. Residues 303 to 304 form repeat 5; that stretch reads FG. The span at 304–317 shows a compositional bias: polar residues; that stretch reads GKDTTQSKPVSSPF. Positions 304 to 345 are disordered; the sequence is GKDTTQSKPVSSPFPTKPLEGQAEGDSGECKGGDEEENDEPP. The 134-residue stretch at 335–468 folds into the RanBD1 domain; it reads GGDEEENDEP…HKILLEKKDA (134 aa). K353 participates in a covalent cross-link: Glycyl lysine isopeptide (Lys-Gly) (interchain with G-Cter in SUMO2). Position 450 is an N6-acetyllysine (K450).

Interacts with Importin alpha-2, Importin beta, Importin beta-2, NUP153, Ran binding protein 7, CDKN1B and itself. Does not interact with TPR. In terms of tissue distribution, ubiquitous. Highest levels in testis, peripheral blood leukocytes and fetal liver.

It localises to the nucleus. The protein localises to the nuclear pore complex. The protein resides in the nucleus membrane. In terms of biological role, component of the nuclear pore complex that has a direct role in nuclear protein import. Actively displaces NLSs from importin-alpha, and facilitates disassembly of the importin-alpha:beta-cargo complex and importin recycling. Interacts with regulatory proteins of cell cycle progression including CDKN1B. This interaction is required for correct intracellular transport and degradation of CDKN1B. This Homo sapiens (Human) protein is Nuclear pore complex protein Nup50 (NUP50).